We begin with the raw amino-acid sequence, 454 residues long: Light-independent protochlorophyllide reductase subunit N (454 aa).

Residues Cys22, Cys47, and Cys107 each contribute to the [4Fe-4S] cluster site.

This sequence belongs to the BchN/ChlN family. As to quaternary structure, protochlorophyllide reductase is composed of three subunits; ChlL, ChlN and ChlB. Forms a heterotetramer of two ChlB and two ChlN subunits. Requires [4Fe-4S] cluster as cofactor.

The protein localises to the plastid. It localises to the chloroplast. The enzyme catalyses chlorophyllide a + oxidized 2[4Fe-4S]-[ferredoxin] + 2 ADP + 2 phosphate = protochlorophyllide a + reduced 2[4Fe-4S]-[ferredoxin] + 2 ATP + 2 H2O. Its pathway is porphyrin-containing compound metabolism; chlorophyll biosynthesis (light-independent). Component of the dark-operative protochlorophyllide reductase (DPOR) that uses Mg-ATP and reduced ferredoxin to reduce ring D of protochlorophyllide (Pchlide) to form chlorophyllide a (Chlide). This reaction is light-independent. The NB-protein (ChlN-ChlB) is the catalytic component of the complex. This is Light-independent protochlorophyllide reductase subunit N from Cycas taitungensis (Prince sago).